A 478-amino-acid chain; its full sequence is Lipoprotein lipase (478 aa).

Positions 1-27 are cleaved as a signal peptide; that stretch reads MESKVLLLLALSVWLQSLTVSRGGLVA. The interval 35–56 is interaction with GPIHBP1; the sequence is KDFRDIESKFALRTPEDTAEDT. Cysteine 57 and cysteine 70 form a disulfide bridge. The N-linked (GlcNAc...) asparagine glycan is linked to asparagine 73. Residue tyrosine 124 is modified to 3'-nitrotyrosine. Serine 162 (nucleophile) is an active-site residue. The active-site Charge relay system is the aspartate 186. Tyrosine 194 bears the 3'-nitrotyrosine mark. Ca(2+)-binding residues include alanine 197, arginine 200, serine 202, and aspartate 205. Residues cysteine 246 and cysteine 269 are joined by a disulfide bond. Residues 246–269 are essential for determining substrate specificity; it reads CNIGEALRVIAERGLGDVDQLVKC. Residue histidine 271 is the Charge relay system of the active site. 2 disulfide bridges follow: cysteine 294–cysteine 313 and cysteine 305–cysteine 308. Residues 344-467 form the PLAT domain; the sequence is FHYQVKIHFS…KGKSPVIFVK (124 aa). Tyrosine 346 bears the 3'-nitrotyrosine mark. Asparagine 389 carries an N-linked (GlcNAc...) asparagine glycan. The tract at residues 420-424 is important for interaction with lipoprotein particles; the sequence is WSNWW. The important for heparin binding stretch occupies residues 433-437; that stretch reads KIRVK. An interaction with GPIHBP1 region spans residues 446–470; the sequence is IFCSREKMSYLQKGKSPVIFVKCHD. Residues cysteine 448 and cysteine 468 are joined by a disulfide bond.

It belongs to the AB hydrolase superfamily. Lipase family. As to quaternary structure, homodimer. Interacts with GPIHBP1 with 1:1 stoichiometry. Interacts with APOC2; the interaction activates LPL activity in the presence of lipids. Interaction with heparan sulfate proteoglycans is required to protect LPL against loss of activity. Associates with lipoprotein particles in blood plasma. Interacts with LMF1 and SEL1L; interaction with SEL1L is required to prevent aggregation of newly synthesized LPL in the endoplasmic reticulum (ER), and for normal export of LPL from the ER to the extracellular space. Interacts with SORL1; SORL1 acts as a sorting receptor, promoting LPL localization to endosomes and later to lysosomes, leading to degradation of newly synthesized LPL. Tyrosine nitration after lipopolysaccharide (LPS) challenge down-regulates the lipase activity.

Its subcellular location is the cell membrane. It is found in the secreted. The protein resides in the extracellular space. It localises to the extracellular matrix. It catalyses the reaction a triacylglycerol + H2O = a diacylglycerol + a fatty acid + H(+). It carries out the reaction a 1,2-diacyl-sn-glycero-3-phosphocholine + H2O = a 2-acyl-sn-glycero-3-phosphocholine + a fatty acid + H(+). The enzyme catalyses 1,2,3-tri-(9Z-octadecenoyl)-glycerol + H2O = di-(9Z)-octadecenoylglycerol + (9Z)-octadecenoate + H(+). The catalysed reaction is 1,2-di-(9Z-octadecenoyl)-sn-glycero-3-phosphocholine + H2O = (9Z-octadecenoyl)-sn-glycero-3-phosphocholine + (9Z)-octadecenoate + H(+). It catalyses the reaction 1,2,3-tributanoylglycerol + H2O = dibutanoylglycerol + butanoate + H(+). It carries out the reaction 1,2-dihexadecanoyl-sn-glycero-3-phosphocholine + H2O = hexadecanoyl-sn-glycero-3-phosphocholine + hexadecanoate + H(+). With respect to regulation, the apolipoprotein APOC2 acts as a coactivator of LPL activity. Ca(2+) binding promotes protein stability and formation of the active homodimer. Interaction with GPIHBP1 protects LPL against inactivation by ANGPTL4. Key enzyme in triglyceride metabolism. Catalyzes the hydrolysis of triglycerides from circulating chylomicrons and very low density lipoproteins (VLDL), and thereby plays an important role in lipid clearance from the blood stream, lipid utilization and storage. Although it has both phospholipase and triglyceride lipase activities it is primarily a triglyceride lipase with low but detectable phospholipase activity. Mediates margination of triglyceride-rich lipoprotein particles in capillaries. Recruited to its site of action on the luminal surface of vascular endothelium by binding to GPIHBP1 and cell surface heparan sulfate proteoglycans. The protein is Lipoprotein lipase (LPL) of Ovis aries (Sheep).